Here is a 389-residue protein sequence, read N- to C-terminus: MPLPTNQLRLAMVAGEPSGDLLAASLLGGLRERLPESAQYYGIGGQRMIAQGFDSHWQMDKLTVRGYVEALGQIPEILRIRGELKRQLLAERPDAFIGVDAPDFNFSVEQAARDAGIPSIHFVCPSIWAWRGGRIKKIAKSVDHMLCLFPFEPAILDKAGVASTYVGHPLADDIPLEPDTHGARIALGLPADGPVIAVLPGSRRSEIALIGPTFFAAMALMQQREPGVRFVMPAATPALRELLQPLVDAHPQLALTITDGRSQVAMTAADAILVKSGTVTLEAALLKKPMVISYKVPWLTGQIMRRQGYLPYVGLPNILAGRFVVPELLQHFATPEALADATLTQLRDDANRRTLTEVFTEMHLSLRQNTAAKAAEAVVRVLEQRKGRA.

It belongs to the LpxB family.

It catalyses the reaction a lipid X + a UDP-2-N,3-O-bis[(3R)-3-hydroxyacyl]-alpha-D-glucosamine = a lipid A disaccharide + UDP + H(+). Its pathway is bacterial outer membrane biogenesis; LPS lipid A biosynthesis. In terms of biological role, condensation of UDP-2,3-diacylglucosamine and 2,3-diacylglucosamine-1-phosphate to form lipid A disaccharide, a precursor of lipid A, a phosphorylated glycolipid that anchors the lipopolysaccharide to the outer membrane of the cell. The polypeptide is Lipid-A-disaccharide synthase (Burkholderia cenocepacia (strain ATCC BAA-245 / DSM 16553 / LMG 16656 / NCTC 13227 / J2315 / CF5610) (Burkholderia cepacia (strain J2315))).